The chain runs to 267 residues: LysM and putative peptidoglycan-binding domain-containing protein 4 (267 aa).

The Extracellular portion of the chain corresponds to 1–211 (MRRGDPPPRA…RSNGADWGIQ (211 aa)). Residues 30 to 64 (HRQEEPEASSEDEELNVMELRPRSRDSSSKEKEGV) are disordered. Residues 35 to 45 (PEASSEDEELN) show a composition bias toward acidic residues. A compositionally biased stretch (basic and acidic residues) spans 49-64 (LRPRSRDSSSKEKEGV). In terms of domain architecture, LysM spans 70-114 (LERDISHEDNLSKLALQYGCKVADIKRVNNLFQEQDMYALKSIKI). An N-linked (GlcNAc...) asparagine glycan is attached at asparagine 79. A disordered region spans residues 130 to 152 (RTPQQRPSHDAAPSNSAMASVSG). A compositionally biased stretch (polar residues) spans 142–152 (PSNSAMASVSG). The chain crosses the membrane as a helical span at residues 212-232 (WWNAVIAMLLIGIVLPIFYVV). The Cytoplasmic segment spans residues 233-267 (YYKTKDSGESAVDNVGVNISVSTSNSTREYNGKSP).

It is found in the membrane. This is LysM and putative peptidoglycan-binding domain-containing protein 4 (lysmd4) from Danio rerio (Zebrafish).